The sequence spans 83 residues: Small ribosomal subunit protein bS18 (83 aa).

This sequence belongs to the bacterial ribosomal protein bS18 family. Part of the 30S ribosomal subunit. Forms a tight heterodimer with protein bS6.

In terms of biological role, binds as a heterodimer with protein bS6 to the central domain of the 16S rRNA, where it helps stabilize the platform of the 30S subunit. The protein is Small ribosomal subunit protein bS18 of Tropheryma whipplei (strain TW08/27) (Whipple's bacillus).